We begin with the raw amino-acid sequence, 328 residues long: MPDRGGENGASCSVGRWSAEEARAIYNLPFNDLLFRAHGLHRENFDPNRIQLSKLLNIKTGGCPEDCGYCSQSASAENGLKASKLMEIETVLEEARKAKAAGATRYCMGAAWRSPKDRDMPALTHMIESVKAMGLETCMTLGMLDSDKAEKLADAGLDYYNHNIDTSERFYPAVITTRSFEDRLDTLANVRNAGIKVCSGGILGLGEETEDRIDMLVTLANLPEPPESVPINMLIPMPGTRLAKAAPVDPLEFVRVVALARILMPKSHVRLTAGRTAMSDEMQALCFFAGANSLFMGDTLLTAANPGDDRDSSLLRRLGIQAETEQPA.

A Radical SAM core domain is found at 48-275 (NRIQLSKLLN…KSHVRLTAGR (228 aa)). [4Fe-4S] cluster contacts are provided by C63, C67, and C70. 4 residues coordinate [2Fe-2S] cluster: C107, C138, C198, and R270.

The protein belongs to the radical SAM superfamily. Biotin synthase family. Homodimer. It depends on [4Fe-4S] cluster as a cofactor. [2Fe-2S] cluster serves as cofactor.

The enzyme catalyses (4R,5S)-dethiobiotin + (sulfur carrier)-SH + 2 reduced [2Fe-2S]-[ferredoxin] + 2 S-adenosyl-L-methionine = (sulfur carrier)-H + biotin + 2 5'-deoxyadenosine + 2 L-methionine + 2 oxidized [2Fe-2S]-[ferredoxin]. It participates in cofactor biosynthesis; biotin biosynthesis; biotin from 7,8-diaminononanoate: step 2/2. Its function is as follows. Catalyzes the conversion of dethiobiotin (DTB) to biotin by the insertion of a sulfur atom into dethiobiotin via a radical-based mechanism. The chain is Biotin synthase from Brucella ovis (strain ATCC 25840 / 63/290 / NCTC 10512).